Consider the following 439-residue polypeptide: Proton pump-interactor 4 (439 aa).

Residues 286–354 (KEEKEIDEET…AKKKKAVCKS (69 aa)) are a coiled coil. A helical membrane pass occupies residues 415–435 (LWVWTVSSAAVALPLALLVVF).

This sequence belongs to the plant Proton pump-interactor protein family.

The protein localises to the cell membrane. Its subcellular location is the endoplasmic reticulum membrane. May regulate plasma membrane ATPase activity. The sequence is that of Proton pump-interactor 4 (PPI4) from Arabidopsis thaliana (Mouse-ear cress).